The sequence spans 908 residues: Glutamate receptor ionotropic, kainate 2 (908 aa).

The N-terminal stretch at 1-31 is a signal peptide; the sequence is MKIIFPILSNPVFRRTVKLLLCLLWIGYSQG. The Extracellular segment spans residues 32-561; that stretch reads TTHVLRFGGI…VFSFLNPLSP (530 aa). N-linked (GlcNAc...) asparagine glycosylation is found at Asn67, Asn73, Asn275, Asn378, Asn412, Asn423, and Asn430. An intrachain disulfide couples Cys96 to Cys347. L-glutamate contacts are provided by Pro516, Ala518, and Arg523. A glycan (N-linked (GlcNAc...) asparagine) is linked at Asn546. Residues 562–582 form a helical membrane-spanning segment; it reads DIWMYVLLACLGVSCVLFVIA. Residues 583–638 lie on the Cytoplasmic side of the membrane; it reads RFSPYEWYNPHPCNPDSDVVENNFTLLNSFWFGVGALMRQGSELMPKALSTRIVGG. Residues 639-659 form a helical membrane-spanning segment; that stretch reads IWWFFTLIIISSYTANLAAFL. Topologically, residues 660 to 819 are extracellular; the sequence is TVERMESPID…KEASALGVQN (160 aa). L-glutamate is bound by residues Ala689, Thr690, and Glu738. Cys750 and Cys804 are oxidised to a cystine. The N-linked (GlcNAc...) asparagine glycan is linked to Asn751. Residues 820–840 traverse the membrane as a helical segment; it reads IGGIFIVLAAGLVLSVFVAVG. The Cytoplasmic segment spans residues 841 to 908; the sequence is EFLYKSKKNA…RRLPGKETMA (68 aa). Residues Ser846 and Ser868 each carry the phosphoserine; by PKC modification. Lys886 participates in a covalent cross-link: Glycyl lysine isopeptide (Lys-Gly) (interchain with G-Cter in SUMO1).

Belongs to the glutamate-gated ion channel (TC 1.A.10.1) family. GRIK2 subfamily. Homotetramer and heterotetramer with GRIK5. Tetramers may be formed by the dimerization of dimers. Assembles into a kainate-gated homomeric channel that does not bind AMPA. Can form functional heteromeric receptors with GRIK3, GRIK4 and GRIK5. Interacts with NETO2. Interacts with DLG4. Interacts with NETO2. Interacts (via C-terminus) with KLHL17 (via kelch repeats); the interaction targets GRIK2 for degradation via ubiquitin-proteasome pathway. Sumoylation mediates kainate receptor-mediated endocytosis and regulates synaptic transmission. Sumoylation is enhanced by PIAS3 and desumoylated by SENP1. In terms of processing, ubiquitinated. Ubiquitination regulates the GRIK2 levels at the synapse by leading kainate receptor degradation through proteasome. Post-translationally, phosphorylated by PKC at Ser-868 upon agonist activation, this directly enhance sumoylation.

Its subcellular location is the cell membrane. The protein localises to the postsynaptic cell membrane. The catalysed reaction is Ca(2+)(in) = Ca(2+)(out). The enzyme catalyses Na(+)(in) = Na(+)(out). With respect to regulation, cold receptor activity activated by temperatures between 10-19 degrees Celsius. In terms of biological role, ionotropic glutamate receptor that functions as a cation-permeable ligand-gated ion channel, gated by L-glutamate and the glutamatergic agonist kainic acid. L-glutamate acts as an excitatory neurotransmitter at many synapses in the central nervous system. Binding of the excitatory neurotransmitter L-glutamate induces a conformation change, leading to the opening of the cation channel, and thereby converts the chemical signal to an electrical impulse. The receptor then desensitizes rapidly and enters a transient inactive state, characterized by the presence of bound agonist. Modulates cell surface expression of NETO2. In association with GRIK3, involved in presynaptic facilitation of glutamate release at hippocampal mossy fiber synapses. Its function is as follows. Independent of its ionotropic glutamate receptor activity, acts as a thermoreceptor conferring sensitivity to cold temperatures. Functions in dorsal root ganglion neurons. In Macaca fascicularis (Crab-eating macaque), this protein is Glutamate receptor ionotropic, kainate 2 (GRIK2).